Here is an 830-residue protein sequence, read N- to C-terminus: GPI ethanolamine phosphate transferase 2 (830 aa).

A signal peptide spans 1-32 (MNLKQFTCLSCAQLLAILLFIFAFFPRKIVLT). Residues 33–321 (GISKQDPDQD…QYLETVQQID (289 aa)) are Lumenal-facing. N-linked (GlcNAc...) asparagine glycans are attached at residues N145, N185, and N298. The chain crosses the membrane as a helical span at residues 322–342 (IVPTIAALFGMPIPMNSVGII). The Cytoplasmic portion of the chain corresponds to 343-405 (IPDFLQLLPN…TKSATNYNYP (63 aa)). A helical membrane pass occupies residues 406–426 (LLTLAFVGFLIITIIAIYVLL). The Lumenal segment spans residues 427–439 (RYSGPDFWQLRVS). The helical transmembrane segment at 440 to 460 (SLSVLLVSIILGVSTFASSFI) threads the bilayer. Over 461–469 (EEEHQLWWW) the chain is Cytoplasmic. Residues 470-490 (IVTAFSAVPLFVYRLNVLIIV) traverse the membrane as a helical segment. Residues 491–533 (RWFIMMACVRSIKFWNNSGQKFIYSNVMSNLLNQNPSWKWCLN) lie on the Lumenal side of the membrane. Residue N506 is glycosylated (N-linked (GlcNAc...) asparagine). A helical membrane pass occupies residues 534–554 (MLTFLVLIMASAGFQVLHFIV). Residues 555–598 (TTILVGLCFTYKISWEIVNGNQAEIPLFMHDLLAKIDFAPTESN) lie on the Cytoplasmic side of the membrane. Residues 599–619 (LIVLARVFFQAWAIVVISRLV) form a helical membrane-spanning segment. The Lumenal segment spans residues 620 to 651 (LTKLKVLNKNYLIKDMKVYITILLMFQTSSQN). A helical transmembrane segment spans residues 652–672 (IGQFLVFQILESQIFYFFQNI). Residues 673–682 (PTASLTSTSK) lie on the Cytoplasmic side of the membrane. The helical transmembrane segment at 683-703 (IYFSNLVSLILQNFTFFQFGG) threads the bilayer. Topologically, residues 704–724 (TNSISTIDLGNAYHGVSSDYN) are lumenal. The chain crosses the membrane as a helical span at residues 725–745 (IYVVGILMSVANFAPAIYWSM). The Cytoplasmic segment spans residues 746-768 (LPWSINYASIPAQVKLQTFIRSK). The helical transmembrane segment at 769–789 (LPAFTYHCIFGTCLMTACVVL) threads the bilayer. Residues 790-805 (RFHLFIWSVFSPKLCY) are Lumenal-facing. The helical transmembrane segment at 806–826 (FLGWNFVMGLLNGWLPELALL) threads the bilayer. Residues 827-830 (CALD) are Cytoplasmic-facing.

This sequence belongs to the PIGG/PIGN/PIGO family. PIGG subfamily. Post-translationally, N-glycosylated.

It is found in the endoplasmic reticulum membrane. The protein operates within glycolipid biosynthesis; glycosylphosphatidylinositol-anchor biosynthesis. Functionally, ethanolamine phosphate transferase involved in glycosylphosphatidylinositol-anchor biosynthesis. Transfers ethanolamine phosphate to the GPI second mannose. Although not essential, addition of ethanolamine phosphate to the second mannose plays an important role in cell separation via the GPI-based modification of daughter-specific proteins. The polypeptide is GPI ethanolamine phosphate transferase 2 (LAS21) (Saccharomyces cerevisiae (strain ATCC 204508 / S288c) (Baker's yeast)).